The primary structure comprises 320 residues: tRNA-cytidine(32) 2-sulfurtransferase (320 aa).

A PP-loop motif motif is present at residues 54–59; the sequence is SGGKDS. [4Fe-4S] cluster is bound by residues Cys129, Cys132, and Cys220.

It belongs to the TtcA family. As to quaternary structure, homodimer. It depends on Mg(2+) as a cofactor. Requires [4Fe-4S] cluster as cofactor.

It is found in the cytoplasm. The enzyme catalyses cytidine(32) in tRNA + S-sulfanyl-L-cysteinyl-[cysteine desulfurase] + AH2 + ATP = 2-thiocytidine(32) in tRNA + L-cysteinyl-[cysteine desulfurase] + A + AMP + diphosphate + H(+). The protein operates within tRNA modification. Its function is as follows. Catalyzes the ATP-dependent 2-thiolation of cytidine in position 32 of tRNA, to form 2-thiocytidine (s(2)C32). The sulfur atoms are provided by the cysteine/cysteine desulfurase (IscS) system. This Bordetella bronchiseptica (strain ATCC BAA-588 / NCTC 13252 / RB50) (Alcaligenes bronchisepticus) protein is tRNA-cytidine(32) 2-sulfurtransferase.